Consider the following 249-residue polypeptide: Methionine aminopeptidase 2 (249 aa).

Residue His-76 participates in substrate binding. Residues Asp-94, Asp-105, and His-168 each coordinate a divalent metal cation. His-175 contributes to the substrate binding site. A divalent metal cation is bound by residues Glu-202 and Glu-233.

In terms of assembly, monomer. Co(2+) serves as cofactor. Zn(2+) is required as a cofactor. The cofactor is Mn(2+). It depends on Fe(2+) as a cofactor.

Its subcellular location is the cytoplasm. It catalyses the reaction Release of N-terminal amino acids, preferentially methionine, from peptides and arylamides.. Its function is as follows. Removes the N-terminal methionine from nascent proteins. The N-terminal methionine is often cleaved when the second residue in the primary sequence is small and uncharged (Met-Ala-, Cys, Gly, Pro, Ser, Thr, or Val). Requires deformylation of the N(alpha)-formylated initiator methionine before it can be hydrolyzed. This Bacillus subtilis (strain 168) protein is Methionine aminopeptidase 2.